The chain runs to 374 residues: Phosphoserine aminotransferase (374 aa).

Arginine 46 contributes to the L-glutamate binding site. Residues 80–81, phenylalanine 104, threonine 150, aspartate 174, and glutamine 197 each bind pyridoxal 5'-phosphate; that span reads AT. The residue at position 198 (lysine 198) is an N6-(pyridoxal phosphate)lysine. Position 249–250 (249–250) interacts with pyridoxal 5'-phosphate; sequence NT.

It belongs to the class-V pyridoxal-phosphate-dependent aminotransferase family. SerC subfamily. Homodimer. The cofactor is pyridoxal 5'-phosphate.

It is found in the cytoplasm. It carries out the reaction O-phospho-L-serine + 2-oxoglutarate = 3-phosphooxypyruvate + L-glutamate. The catalysed reaction is 4-(phosphooxy)-L-threonine + 2-oxoglutarate = (R)-3-hydroxy-2-oxo-4-phosphooxybutanoate + L-glutamate. It functions in the pathway amino-acid biosynthesis; L-serine biosynthesis; L-serine from 3-phospho-D-glycerate: step 2/3. It participates in cofactor biosynthesis; pyridoxine 5'-phosphate biosynthesis; pyridoxine 5'-phosphate from D-erythrose 4-phosphate: step 3/5. Its function is as follows. Catalyzes the reversible conversion of 3-phosphohydroxypyruvate to phosphoserine and of 3-hydroxy-2-oxo-4-phosphonooxybutanoate to phosphohydroxythreonine. The chain is Phosphoserine aminotransferase from Nocardioides sp. (strain ATCC BAA-499 / JS614).